The sequence spans 267 residues: 5'-nucleotidase SurE (267 aa).

A divalent metal cation is bound by residues Asp-9, Asp-10, Ser-40, and Asn-97.

It belongs to the SurE nucleotidase family. Requires a divalent metal cation as cofactor.

It localises to the cytoplasm. The enzyme catalyses a ribonucleoside 5'-phosphate + H2O = a ribonucleoside + phosphate. Nucleotidase that shows phosphatase activity on nucleoside 5'-monophosphates. The sequence is that of 5'-nucleotidase SurE from Helicobacter pylori (strain Shi470).